Consider the following 636-residue polypeptide: Chaperone protein DnaK (636 aa).

Thr-196 bears the Phosphothreonine; by autocatalysis mark. The interval Leu-591–Lys-636 is disordered. Basic and acidic residues predominate over residues Pro-614 to Val-624.

It belongs to the heat shock protein 70 family.

Acts as a chaperone. This chain is Chaperone protein DnaK, found in Solibacter usitatus (strain Ellin6076).